Reading from the N-terminus, the 379-residue chain is Putative acetyl-CoA C-acetyltransferase VraB (379 aa).

C86 serves as the catalytic Acyl-thioester intermediate. H338 (proton acceptor) is an active-site residue.

This sequence belongs to the thiolase-like superfamily. Thiolase family.

The polypeptide is Putative acetyl-CoA C-acetyltransferase VraB (vraB) (Staphylococcus aureus (strain COL)).